A 622-amino-acid chain; its full sequence is DNA topoisomerase 3 (622 aa).

A Toprim domain is found at 2–148; sequence RVLCVAEKNS…SIQVIRADFN (147 aa). Residues 166-596 form the Topo IA-type catalytic domain; that stretch reads SKNAADAVDA…MILTQFRDVF (431 aa). Catalysis depends on Tyr-330, which acts as the O-(5'-phospho-DNA)-tyrosine intermediate.

The protein belongs to the type IA topoisomerase family. Interacts with hus2.

The enzyme catalyses ATP-independent breakage of single-stranded DNA, followed by passage and rejoining.. Functionally, releases the supercoiling and torsional tension of DNA introduced during the DNA replication and transcription by transiently cleaving and rejoining one strand of the DNA duplex. Introduces a single-strand break via transesterification at a target site in duplex DNA. The scissile phosphodiester is attacked by the catalytic tyrosine of the enzyme, resulting in the formation of a DNA-(5'-phosphotyrosyl)-enzyme intermediate and the expulsion of a 3'-OH DNA strand. The free DNA strand than undergoes passage around the unbroken strand thus removing DNA supercoils. Finally, in the religation step, the DNA 3'-OH attacks the covalent intermediate to expel the active-site tyrosine and restore the DNA phosphodiester backbone. This Schizosaccharomyces pombe (strain 972 / ATCC 24843) (Fission yeast) protein is DNA topoisomerase 3 (top3).